We begin with the raw amino-acid sequence, 465 residues long: Gamma-aminobutyric acid receptor subunit gamma-1 (465 aa).

Positions 1-20 (MGSGKVFLFSPSLLWSQTRG) are cleaved as a signal peptide. Over 21–273 (VRLIFLLLTL…FDLSRRMGYF (253 aa)) the chain is Extracellular. Residues Asn-50 and Asn-127 are each glycosylated (N-linked (GlcNAc...) asparagine). An intrachain disulfide couples Cys-188 to Cys-202. Asn-245 carries N-linked (GlcNAc...) asparagine glycosylation. A helical membrane pass occupies residues 274-294 (TIQTYIPCILTVVLSWVSFWI). Residues 295–300 (NKDAVP) lie on the Cytoplasmic side of the membrane. Residues 301-320 (ARTSLGITTVLTMTTLSTIA) traverse the membrane as a helical segment. Residues 321-328 (RKSLPKVS) lie on the Extracellular side of the membrane. The chain crosses the membrane as a helical span at residues 329–349 (YVTAMDLFVSVCFIFVFAALM). Over 350–444 (EYGTLHYFTS…RIAKIDSYSR (95 aa)) the chain is Cytoplasmic. The helical transmembrane segment at 445–465 (IFFPTAFALFNLVYWVGYLYL) threads the bilayer.

This sequence belongs to the ligand-gated ion channel (TC 1.A.9) family. Gamma-aminobutyric acid receptor (TC 1.A.9.5) subfamily. GABRG1 sub-subfamily. Heteropentamer, formed by a combination of alpha (GABRA1-6), beta (GABRB1-3), gamma (GABRG1-3), delta (GABRD), epsilon (GABRE), rho (GABRR1-3), pi (GABRP) and theta (GABRQ) chains, each subunit exhibiting distinct physiological and pharmacological properties. In terms of processing, may be palmitoylated. In terms of tissue distribution, expressed in brain.

The protein localises to the postsynaptic cell membrane. The protein resides in the cell membrane. The enzyme catalyses chloride(in) = chloride(out). Its function is as follows. Gamma subunit of the heteropentameric ligand-gated chloride channel gated by gamma-aminobutyric acid (GABA), a major inhibitory neurotransmitter in the brain. GABA-gated chloride channels, also named GABA(A) receptors (GABAAR), consist of five subunits arranged around a central pore and contain GABA active binding site(s) located at the alpha and beta subunit interface(s). When activated by GABA, GABAARs selectively allow the flow of chloride anions across the cell membrane down their electrochemical gradient. Chloride influx into the postsynaptic neuron following GABAAR opening decreases the neuron ability to generate a new action potential, thereby reducing nerve transmission. The protein is Gamma-aminobutyric acid receptor subunit gamma-1 of Rattus norvegicus (Rat).